Reading from the N-terminus, the 54-residue chain is uncharacterized protein (54 aa).

Residues 6–26 (ILIYLLIFVAGIVIGKIRINV) form a helical membrane-spanning segment.

It is found in the host membrane. This is an uncharacterized protein from Acidianus convivator (ABV).